The primary structure comprises 518 residues: UPF0288 protein Mbar_A0706 (518 aa).

Belongs to the UPF0288 family.

This is UPF0288 protein Mbar_A0706 from Methanosarcina barkeri (strain Fusaro / DSM 804).